The primary structure comprises 200 residues: Guanylate kinase (200 aa).

The Guanylate kinase-like domain occupies 6–184 (GLLIVLSGPS…AVDKLKSILL (179 aa)). 13 to 20 (GPSGAGKG) lines the ATP pocket.

Belongs to the guanylate kinase family.

Its subcellular location is the cytoplasm. It carries out the reaction GMP + ATP = GDP + ADP. Essential for recycling GMP and indirectly, cGMP. The chain is Guanylate kinase from Desulfitobacterium hafniense (strain Y51).